A 1012-amino-acid chain; its full sequence is Formate dehydrogenase 2 subunit alpha (cytochrome c-553) (1012 aa).

The tat-type signal signal peptide spans 1–33 (MKTTRRSFLKLVGVSVVGLSLGQLGFDLEDAQA). One can recognise a 4Fe-4S Mo/W bis-MGD-type domain in the interval 43-99 (AKEVGTVCPFCSVCCQVIAYVRNGKLVSTEGDPDFPVNEGALCAKGAALFSMYTNPH). Positions 50, 53, 57, and 85 each coordinate [4Fe-4S] cluster. Sec189 provides a ligand contact to W-bis(molybdopterin guanine dinucleotide). Position 189 (Sec189) is a non-standard amino acid, selenocysteine. Positions 389, 391, 394, 424, and 426 each coordinate Ca(2+).

The protein belongs to the prokaryotic molybdopterin-containing oxidoreductase family. In terms of assembly, heterotrimer of cytochrome c3 FDH2C and formate dehydrogenase FDH2 alpha and beta subunits that forms the FdhABC(3) complex. It depends on [4Fe-4S] cluster as a cofactor. W-bis(molybdopterin guanine dinucleotide) serves as cofactor. Predicted to be exported by the Tat system. The position of the signal peptide cleavage has not been experimentally proven.

Its subcellular location is the periplasm. It catalyses the reaction 2 Fe(III)-[cytochrome c553] + formate = 2 Fe(II)-[cytochrome c553] + CO2 + H(+). Functionally, alpha chain of the formate dehydrogenase (FDH) that catalyzes the reversible two-electron oxidation of formate to carbon dioxide. The alpha subunit of formate dehydrogenase forms the active site. The protein is Formate dehydrogenase 2 subunit alpha (cytochrome c-553) of Nitratidesulfovibrio vulgaris (strain ATCC 29579 / DSM 644 / CCUG 34227 / NCIMB 8303 / VKM B-1760 / Hildenborough) (Desulfovibrio vulgaris).